The primary structure comprises 432 residues: 3-phosphoshikimate 1-carboxyvinyltransferase (432 aa).

Lysine 22, serine 23, and arginine 27 together coordinate 3-phosphoshikimate. Residue lysine 22 participates in phosphoenolpyruvate binding. The phosphoenolpyruvate site is built by glycine 96 and arginine 127. Serine 173, serine 174, glutamine 175, serine 201, aspartate 316, asparagine 339, and lysine 343 together coordinate 3-phosphoshikimate. Glutamine 175 lines the phosphoenolpyruvate pocket. Catalysis depends on aspartate 316, which acts as the Proton acceptor. Residues arginine 347, arginine 391, and lysine 416 each contribute to the phosphoenolpyruvate site.

It belongs to the EPSP synthase family. As to quaternary structure, monomer.

The protein resides in the cytoplasm. The catalysed reaction is 3-phosphoshikimate + phosphoenolpyruvate = 5-O-(1-carboxyvinyl)-3-phosphoshikimate + phosphate. It functions in the pathway metabolic intermediate biosynthesis; chorismate biosynthesis; chorismate from D-erythrose 4-phosphate and phosphoenolpyruvate: step 6/7. Catalyzes the transfer of the enolpyruvyl moiety of phosphoenolpyruvate (PEP) to the 5-hydroxyl of shikimate-3-phosphate (S3P) to produce enolpyruvyl shikimate-3-phosphate and inorganic phosphate. The protein is 3-phosphoshikimate 1-carboxyvinyltransferase of Actinobacillus pleuropneumoniae serotype 7 (strain AP76).